The chain runs to 273 residues: Shikimate dehydrogenase (NADP(+)) (273 aa).

Shikimate contacts are provided by residues 15–17 (SLS) and Thr-62. The active-site Proton acceptor is Lys-66. Glu-78 contacts NADP(+). The shikimate site is built by Asn-87 and Asp-102. NADP(+) contacts are provided by residues 126 to 130 (GAGGA), 150 to 155 (NRTIEK), and Ile-217. Shikimate is bound at residue Tyr-219. NADP(+) is bound at residue Gly-240.

It belongs to the shikimate dehydrogenase family. As to quaternary structure, homodimer.

It carries out the reaction shikimate + NADP(+) = 3-dehydroshikimate + NADPH + H(+). Its pathway is metabolic intermediate biosynthesis; chorismate biosynthesis; chorismate from D-erythrose 4-phosphate and phosphoenolpyruvate: step 4/7. Functionally, involved in the biosynthesis of the chorismate, which leads to the biosynthesis of aromatic amino acids. Catalyzes the reversible NADPH linked reduction of 3-dehydroshikimate (DHSA) to yield shikimate (SA). In Nitrosopumilus maritimus (strain SCM1), this protein is Shikimate dehydrogenase (NADP(+)).